The sequence spans 340 residues: NADH-quinone oxidoreductase subunit H (340 aa).

Helical transmembrane passes span 4-24 (TIGI…PLLL), 78-98 (YLFV…WAVI), 113-133 (VLYL…AGWA), 151-171 (VSYE…AGSM), 184-204 (MLHW…IAGI), 244-264 (SMIL…LSPF), 273-293 (IFFV…FLFV), and 316-336 (VLIP…VAHV).

It belongs to the complex I subunit 1 family. NDH-1 is composed of 14 different subunits. Subunits NuoA, H, J, K, L, M, N constitute the membrane sector of the complex.

It localises to the cell inner membrane. It catalyses the reaction a quinone + NADH + 5 H(+)(in) = a quinol + NAD(+) + 4 H(+)(out). Functionally, NDH-1 shuttles electrons from NADH, via FMN and iron-sulfur (Fe-S) centers, to quinones in the respiratory chain. The immediate electron acceptor for the enzyme in this species is believed to be ubiquinone. Couples the redox reaction to proton translocation (for every two electrons transferred, four hydrogen ions are translocated across the cytoplasmic membrane), and thus conserves the redox energy in a proton gradient. This subunit may bind ubiquinone. The chain is NADH-quinone oxidoreductase subunit H from Legionella pneumophila (strain Paris).